We begin with the raw amino-acid sequence, 361 residues long: Tyrosine--tRNA ligase (361 aa).

Positions 36, 162, 166, 169, and 184 each coordinate L-tyrosine. The 'KMSKS' region signature appears at 236–240 (KMSKS). K239 contacts ATP.

It belongs to the class-I aminoacyl-tRNA synthetase family. TyrS type 4 subfamily. Homodimer.

Its subcellular location is the cytoplasm. The enzyme catalyses tRNA(Tyr) + L-tyrosine + ATP = L-tyrosyl-tRNA(Tyr) + AMP + diphosphate + H(+). In terms of biological role, catalyzes the attachment of tyrosine to tRNA(Tyr) in a two-step reaction: tyrosine is first activated by ATP to form Tyr-AMP and then transferred to the acceptor end of tRNA(Tyr). This chain is Tyrosine--tRNA ligase, found in Saccharolobus islandicus (strain M.14.25 / Kamchatka #1) (Sulfolobus islandicus).